The chain runs to 566 residues: Amidophosphoribosyltransferase 1, chloroplastic (566 aa).

Residues 1–13 are compositionally biased toward low complexity; sequence MAATTSFSSSLSL. 2 disordered regions span residues 1 to 28 and 58 to 87; these read MAATTSFSSSLSLITKPNNSSYTNQPLP and VSSYFSSPSPSEDNSHTPFDYHNDEDDEKP. Residues 1-58 constitute a chloroplast transit peptide; sequence MAATTSFSSSLSLITKPNNSSYTNQPLPLFPKPFLKPPHLSLLPSPLSSPPPSLIHGV. The span at 15-25 shows a compositional bias: polar residues; it reads TKPNNSSYTNQ. Over residues 59–68 the composition is skewed to low complexity; that stretch reads SSYFSSPSPS. The span at 70-87 shows a compositional bias: basic and acidic residues; that stretch reads DNSHTPFDYHNDEDDEKP. The active-site Nucleophile is C91. In terms of domain architecture, Glutamine amidotransferase type-2 spans 91 to 311; the sequence is CGVVGIYGDP…PGEVLVVDKD (221 aa). Positions 327, 473, 524, and 527 each coordinate [4Fe-4S] cluster.

This sequence in the C-terminal section; belongs to the purine/pyrimidine phosphoribosyltransferase family. [4Fe-4S] cluster is required as a cofactor. Mg(2+) serves as cofactor. In terms of tissue distribution, expressed in flowers and roots. Also present in leaves, and, to a lower extent, in cotyledons.

Its subcellular location is the plastid. It is found in the chloroplast stroma. It carries out the reaction 5-phospho-beta-D-ribosylamine + L-glutamate + diphosphate = 5-phospho-alpha-D-ribose 1-diphosphate + L-glutamine + H2O. Its pathway is purine metabolism; IMP biosynthesis via de novo pathway; N(1)-(5-phospho-D-ribosyl)glycinamide from 5-phospho-alpha-D-ribose 1-diphosphate: step 1/2. Functionally, catalyzes the first committed step of 'de novo' purine biosynthesis from glutamine. Involved in plastid biogenesis and cell division. The sequence is that of Amidophosphoribosyltransferase 1, chloroplastic (ASE1) from Arabidopsis thaliana (Mouse-ear cress).